The following is a 306-amino-acid chain: MTAIDFHGVFPAMCTPFHQDGSIDFETLRDDAQRLESAGVDGLVPVGSTGESATLSHDEHIEVVEAVIDAVDDVPVIAGSGSNNTKEALELSRRSAEAGADALLLISPYYNKPEQQGFIDHYTTLADAVDLPQIVYNVPSRTGQNIEPDTAAELASHPNIRAYKAASGDMNQISEIIERTRDEDFAVLSGDDGMTLPMLSVGGTGCISVSANIEPERTCAMVGAALSGDFERAQAIHHELGPLFRAMFVETNPIPVKEAMRIRGYGPAHLRSPLTRLSDEHLDHLRDVLATLETEDLEDEYAEAER.

Position 49 (Thr49) interacts with pyruvate. The active-site Proton donor/acceptor is the Tyr136. The Schiff-base intermediate with substrate role is filled by Lys164. Ile207 contacts pyruvate.

Belongs to the DapA family. In terms of assembly, homotetramer; dimer of dimers.

The protein localises to the cytoplasm. It carries out the reaction L-aspartate 4-semialdehyde + pyruvate = (2S,4S)-4-hydroxy-2,3,4,5-tetrahydrodipicolinate + H2O + H(+). The protein operates within amino-acid biosynthesis; L-lysine biosynthesis via DAP pathway; (S)-tetrahydrodipicolinate from L-aspartate: step 3/4. Its function is as follows. Catalyzes the condensation of (S)-aspartate-beta-semialdehyde [(S)-ASA] and pyruvate to 4-hydroxy-tetrahydrodipicolinate (HTPA). The sequence is that of 4-hydroxy-tetrahydrodipicolinate synthase from Haloarcula marismortui (strain ATCC 43049 / DSM 3752 / JCM 8966 / VKM B-1809) (Halobacterium marismortui).